Consider the following 192-residue polypeptide: Imidazole glycerol phosphate synthase subunit HisH (192 aa).

One can recognise a Glutamine amidotransferase type-1 domain in the interval 1 to 192 (MIAIIDYGLG…QALKGGFIND (192 aa)). Cysteine 77 (nucleophile) is an active-site residue. Residues histidine 169 and glutamate 171 contribute to the active site.

Heterodimer of HisH and HisF.

It is found in the cytoplasm. It carries out the reaction 5-[(5-phospho-1-deoxy-D-ribulos-1-ylimino)methylamino]-1-(5-phospho-beta-D-ribosyl)imidazole-4-carboxamide + L-glutamine = D-erythro-1-(imidazol-4-yl)glycerol 3-phosphate + 5-amino-1-(5-phospho-beta-D-ribosyl)imidazole-4-carboxamide + L-glutamate + H(+). It catalyses the reaction L-glutamine + H2O = L-glutamate + NH4(+). The protein operates within amino-acid biosynthesis; L-histidine biosynthesis; L-histidine from 5-phospho-alpha-D-ribose 1-diphosphate: step 5/9. Functionally, IGPS catalyzes the conversion of PRFAR and glutamine to IGP, AICAR and glutamate. The HisH subunit catalyzes the hydrolysis of glutamine to glutamate and ammonia as part of the synthesis of IGP and AICAR. The resulting ammonia molecule is channeled to the active site of HisF. The polypeptide is Imidazole glycerol phosphate synthase subunit HisH (Staphylococcus epidermidis (strain ATCC 35984 / DSM 28319 / BCRC 17069 / CCUG 31568 / BM 3577 / RP62A)).